The chain runs to 201 residues: NADH-quinone oxidoreductase subunit C (201 aa).

Belongs to the complex I 30 kDa subunit family. NDH-1 is composed of 14 different subunits. Subunits NuoB, C, D, E, F, and G constitute the peripheral sector of the complex.

Its subcellular location is the cell inner membrane. The enzyme catalyses a quinone + NADH + 5 H(+)(in) = a quinol + NAD(+) + 4 H(+)(out). In terms of biological role, NDH-1 shuttles electrons from NADH, via FMN and iron-sulfur (Fe-S) centers, to quinones in the respiratory chain. The immediate electron acceptor for the enzyme in this species is believed to be ubiquinone. Couples the redox reaction to proton translocation (for every two electrons transferred, four hydrogen ions are translocated across the cytoplasmic membrane), and thus conserves the redox energy in a proton gradient. This Sinorhizobium medicae (strain WSM419) (Ensifer medicae) protein is NADH-quinone oxidoreductase subunit C.